Reading from the N-terminus, the 344-residue chain is Oxygen sensor histidine kinase NreB (344 aa).

4 residues coordinate [4Fe-4S] cluster: cysteine 58, cysteine 61, cysteine 73, and cysteine 76. A Histidine kinase domain is found at 147–344 (ENERKRISRE…GTIITLDIPI (198 aa)). Histidine 158 is subject to Phosphohistidine; by autocatalysis.

Requires [4Fe-4S] cluster as cofactor. Post-translationally, autophosphorylated.

It localises to the cytoplasm. The catalysed reaction is ATP + protein L-histidine = ADP + protein N-phospho-L-histidine.. Functionally, member of the two-component regulatory system NreB/NreC involved in the control of dissimilatory nitrate/nitrite reduction in response to oxygen. NreB functions as a direct oxygen sensor histidine kinase which is autophosphorylated, in the absence of oxygen, probably at the conserved histidine residue, and transfers its phosphate group probably to a conserved aspartate residue of NreC. NreB/NreC activates the expression of the nitrate (narGHJI) and nitrite (nir) reductase operons, as well as the putative nitrate transporter gene narT. This is Oxygen sensor histidine kinase NreB (nreB) from Staphylococcus epidermidis (strain ATCC 35984 / DSM 28319 / BCRC 17069 / CCUG 31568 / BM 3577 / RP62A).